The sequence spans 727 residues: Engulfment and cell motility protein 1 (727 aa).

Tyr-18 is subject to Phosphotyrosine; by HCK. Residues Lys-100 and Lys-105 each carry the N6-acetyllysine modification. Tyr-216 carries the phosphotyrosine; by HCK modification. One can recognise an ELMO domain in the interval 319 to 492 (AQRDIIFELR…VVKEQVMRAL (174 aa)). Phosphoserine is present on Ser-344. Tyr-395 and Tyr-511 each carry phosphotyrosine; by HCK. The PH domain maps to 555 to 676 (RLVEGTCFRK…DGLNALLGKD (122 aa)). The SH3-binding signature appears at 707–714 (PDAPPPIP). Position 720 is a phosphotyrosine; by HCK (Tyr-720).

Interacts with ADGRB1. Interacts directly with the SH3-domain of DOCK1 via its SH3-binding site. Part of a complex with DOCK1 and RAC1. Part of a complex with DOCK1 and CRK isoform CRK-II. Interacts with PLEKHG6. Interacts with HCK (via SH3 domain). Interacts with ADGRB3. Interacts with DOCK5. In terms of processing, phosphorylated by HCK. As to expression, widely expressed, with a higher expression in the spleen and placenta.

Its subcellular location is the cytoplasm. It localises to the cell membrane. In terms of biological role, involved in cytoskeletal rearrangements required for phagocytosis of apoptotic cells and cell motility. Acts in association with DOCK1 and CRK. Was initially proposed to be required in complex with DOCK1 to activate Rac Rho small GTPases. May enhance the guanine nucleotide exchange factor (GEF) activity of DOCK1. The sequence is that of Engulfment and cell motility protein 1 (ELMO1) from Homo sapiens (Human).